Reading from the N-terminus, the 446-residue chain is L-2-hydroxyglutarate dehydrogenase, mitochondrial (446 aa).

The transit peptide at 1-28 (MKNSSSMLKGVKSFIGSGIYTNKPIYDV) directs the protein to the mitochondrion.

The protein belongs to the L2HGDH family. FAD is required as a cofactor.

The protein localises to the mitochondrion. It carries out the reaction (S)-2-hydroxyglutarate + A = 2-oxoglutarate + AH2. This chain is L-2-hydroxyglutarate dehydrogenase, mitochondrial (l2hgdh), found in Dictyostelium discoideum (Social amoeba).